Here is a 611-residue protein sequence, read N- to C-terminus: Adenosylhomocysteinase 3 (611 aa).

Composition is skewed to low complexity over residues 1 to 14 (MSVQ…AAKV), 36 to 57 (AAVG…APAA), and 68 to 81 (GPAA…GKVP). Residues 1-184 (MSVQVVSAAA…KQQKNSKGSS (184 aa)) form a disordered region. Serine 2 carries the N-acetylserine modification. The LISN domain, inhibits interaction with ITPR1 stretch occupies residues 2 to 109 (SVQVVSAAAA…DGGEALVSPD (108 aa)). Residue serine 107 is modified to Phosphoserine. Over residues 135 to 144 (RPTKIGRRSL) the composition is skewed to basic residues. Residues 145–164 (SRSISQSSTDSYSSAASYTD) are compositionally biased toward low complexity. Phosphoserine occurs at positions 149, 152, 155, and 158. Residues threonine 236, aspartate 310, and glutamate 335 each contribute to the substrate site. Position 336–338 (336–338 (SVT)) interacts with NAD(+). Substrate is bound by residues lysine 365 and aspartate 369. Residues asparagine 370, 401-406 (GEVGKG), glutamate 422, asparagine 457, 478-479 (MG), and asparagine 525 each bind NAD(+).

It belongs to the adenosylhomocysteinase family. In terms of assembly, homotetramer. Forms heteromultimers with AHCYL1 (via the C-terminal region). Interacts with ITPR1; with lower affinity than AHCYL1 and maybe via ITPR1. Interacts with SLC4A4. Interacts with ZCCHC4. Requires NAD(+) as cofactor. In terms of processing, phosphorylated during neuronal differentiation at the LISN domain.

It is found in the cytoplasm. Its subcellular location is the microsome. It catalyses the reaction S-adenosyl-L-homocysteine + H2O = L-homocysteine + adenosine. Its pathway is amino-acid biosynthesis; L-homocysteine biosynthesis; L-homocysteine from S-adenosyl-L-homocysteine: step 1/1. Functionally, may regulate the electrogenic sodium/bicarbonate cotransporter SLC4A4 activity and Mg(2+)-sensitivity. On the contrary of its homolog AHCYL1, does not regulate ITPR1 sensitivity to inositol 1,4,5-trisphosphate. This is Adenosylhomocysteinase 3 (AHCYL2) from Homo sapiens (Human).